The following is a 353-amino-acid chain: Ig alpha-1 chain C region (353 aa).

Positions 6–98 (PKVFPLSLCS…HYTNPSQDVT (93 aa)) constitute an Ig-like 1 domain. Intrachain disulfides connect C26/C85 and C77/C101. Residues 96-121 (DVTVPCRVPSTPPTPSPSTPPTPSPP) are disordered. Over residues 105-121 (STPPTPSPSTPPTPSPP) the composition is skewed to pro residues. 3 disulfide bridges follow: C123–C180, C147–C204, and C250–C313. Ig-like domains follow at residues 125–220 (PRLS…ATLS) and 228–330 (PEVH…KTID). A glycan (N-linked (GlcNAc...) asparagine) is linked at N144. N-linked (GlcNAc...) asparagine glycosylation occurs at N340. Position 352 (C352) interacts with 3-hydroxy-L-kynurenine.

In terms of assembly, monomeric or polymeric. In terms of processing, 3-Hydroxykynurenine, an oxidized tryptophan metabolite that is common in biological fluids, reacts with alpha-1-microglobulin to form heterogeneous polycyclic chromophores including hydroxanthommatin. The chromophore reacts with accessible cysteines forming non-reducible thioether cross-links with Ig alpha-1 chain C region Cys-352.

Its function is as follows. Ig alpha is the major immunoglobulin class in body secretions. It may serve both to defend against local infection and to prevent access of foreign antigens to the general immunologic system. This chain is Ig alpha-1 chain C region (IGHA1), found in Gorilla gorilla gorilla (Western lowland gorilla).